The following is a 402-amino-acid chain: Serine/threonine-protein phosphatase 4 regulatory subunit 2 (402 aa).

A disordered region spans residues 258–402 (NEDQDDENTG…FSKRNKASES (145 aa)). Residues 266–277 (TGFSNQVINDNN) are compositionally biased toward polar residues. Acidic residues predominate over residues 278 to 319 (DSQEDDDEDSDYIEEDEGDEDEDDDDDEEEEEEEDGDEDEDE). A compositionally biased stretch (basic and acidic residues) spans 320–337 (DKHFDIKVEEEAVKEDAN). A compositionally biased stretch (low complexity) spans 345–358 (NVSNNSDDSSLQND).

The protein belongs to the PPP4R2 family. Regulatory subunit (R2) of the histone H2A phosphatase complex (HTP-C) consisting of PPH3, PSY2 and PSY4.

The protein localises to the nucleus. In terms of biological role, regulatory subunit of the histone H2A phosphatase complex, which dephosphorylates H2AS128ph (gamma-H2A) that has been displaced from sites of DNA lesions in the double-stranded DNA break repair process. Dephosphorylation is necessary for efficient recovery from the DNA damage checkpoint. This is Serine/threonine-protein phosphatase 4 regulatory subunit 2 (PSY4) from Candida glabrata (strain ATCC 2001 / BCRC 20586 / JCM 3761 / NBRC 0622 / NRRL Y-65 / CBS 138) (Yeast).